Reading from the N-terminus, the 482-residue chain is MIVNQALIELTKQVAVAVEEIKFSPNSTSNNSTPTNNKLKSSSSSISNCDSPSSKSKSNSSTSTPTSQPQTPSQLPQQAQQQAQQQHYSANSMNPYYAQQVLLQLQKPSTFVKHVHVVVKNTPFGITLRSKEPLQFNFQNYVIKATLLYDSDPPKMVDFIHNEPLQYVATVSEDGSEVCVDVKVGILSSQHQGSMFLVVLHISHCSAPTPSNSEPISTILTNIGNNSIHSLNVTNICVVSHPIRIVSKLDHVKKEGIPILKKRTFHEILTDKLKKLQKSQDSQSKWIKNLYQQHGAQYDMEPYNSTLHSQKTDSLCSSSTSTPSFNSTSSSSKNQSQSIKNEEEEDGGEDEEEEGGEDNDNESESSNTNSTQLIGKKSINKLPISTTTSSSNFNNLMVNNNINNNNNNNNNNHLIQNTTFSSTSHFQNSFNRVVEVYNLIPEYERVEVIRKMVQQLKSYDLEQLVSTFIDELKCGYESTIIS.

Composition is skewed to low complexity over residues 24–86 and 312–339; these read SPNS…AQQQ and TDSL…SQSI. Disordered regions lie at residues 24–88 and 307–376; these read SPNS…QQHY and LHSQ…LIGK. The span at 342–363 shows a compositional bias: acidic residues; that stretch reads EEEEDGGEDEEEEGGEDNDNES.

This is an uncharacterized protein from Dictyostelium discoideum (Social amoeba).